Consider the following 370-residue polypeptide: Aminomethyltransferase (370 aa).

Belongs to the GcvT family. In terms of assembly, the glycine cleavage system is composed of four proteins: P, T, L and H.

It catalyses the reaction N(6)-[(R)-S(8)-aminomethyldihydrolipoyl]-L-lysyl-[protein] + (6S)-5,6,7,8-tetrahydrofolate = N(6)-[(R)-dihydrolipoyl]-L-lysyl-[protein] + (6R)-5,10-methylene-5,6,7,8-tetrahydrofolate + NH4(+). In terms of biological role, the glycine cleavage system catalyzes the degradation of glycine. This Clostridium botulinum (strain Kyoto / Type A2) protein is Aminomethyltransferase.